The following is a 108-amino-acid chain: Phosphoribosyl-ATP pyrophosphatase (108 aa).

It belongs to the PRA-PH family.

The protein localises to the cytoplasm. It carries out the reaction 1-(5-phospho-beta-D-ribosyl)-ATP + H2O = 1-(5-phospho-beta-D-ribosyl)-5'-AMP + diphosphate + H(+). It participates in amino-acid biosynthesis; L-histidine biosynthesis; L-histidine from 5-phospho-alpha-D-ribose 1-diphosphate: step 2/9. In Thiobacillus denitrificans (strain ATCC 25259 / T1), this protein is Phosphoribosyl-ATP pyrophosphatase.